The chain runs to 332 residues: Polyprenyl transferase yanG (332 aa).

8 helical membrane passes run 42-62, 72-92, 145-165, 170-190, 200-220, 242-262, 266-286, and 300-320; these read IWGA…LAFA, VTAT…FFVV, PAVT…PFMK, FPQV…WVGV, ALPL…FYAT, VKIL…MTAL, LSLI…PWHV, and VFKA…LELV.

The protein belongs to the UbiA prenyltransferase family. It depends on Mg(2+) as a cofactor.

It localises to the membrane. It participates in secondary metabolite biosynthesis; terpenoid biosynthesis. In terms of biological role, polyprenyl transferase; part of the gene cluster that mediates the biosynthesis of yanuthone D, a fungal isoprenoid epoxycyclohexenone that acts as an antibiotic against fungi and bacteria. The first step of the pathway is the synthesis of 6-methylsalicylic acid (6-MSA) by the polyketide synthase yanA. 6-MSA is then converted to m-cresol by the decarboxylase yanB. The cytochrome P450 monooxygenase yanC then catalyzes the oxidation of m-cresol to toluquinol. Epoxidation of toluquinol is then performed by the short chain dehydrogenase yanD, with the help of yanE, and a further prenylation by yanG leads to 7-deacetoxyyanuthone A. The next step is the hydroxylation of C-22 of 7-deacetoxyyanuthone A by the cytochrome P450 monooxygenase yanH to yield 22-deacetylyanuthone A. O-Mevalon transferase yanI then attaches mevalon to the hydroxyl group of 22-deacetylyanuthone A to produce yanuthone E. Finally, the FAD-dependent monooxygenase yanF oxidizes the hydroxyl group at C15 of yanuthone E to form yanuthone D. Furthermore, several branching points in the pathway lead to the production of yanuthones F and G from 7-deacetoxyyanuthone A; yanuthones H and I from 22-deacetylyanuthone A; and yanuthone J from yanuthone E. YanG is also involved in the synthesis of yanuthone X1 which does not have 6-methylsalicylic acid (6-MSA) as precursor. In Aspergillus niger (strain ATCC 1015 / CBS 113.46 / FGSC A1144 / LSHB Ac4 / NCTC 3858a / NRRL 328 / USDA 3528.7), this protein is Polyprenyl transferase yanG.